The sequence spans 393 residues: NAD(P)H-quinone oxidoreductase subunit H, chloroplastic (393 aa).

Belongs to the complex I 49 kDa subunit family. In terms of assembly, NDH is composed of at least 16 different subunits, 5 of which are encoded in the nucleus.

The protein localises to the plastid. Its subcellular location is the chloroplast thylakoid membrane. It carries out the reaction a plastoquinone + NADH + (n+1) H(+)(in) = a plastoquinol + NAD(+) + n H(+)(out). It catalyses the reaction a plastoquinone + NADPH + (n+1) H(+)(in) = a plastoquinol + NADP(+) + n H(+)(out). Its function is as follows. NDH shuttles electrons from NAD(P)H:plastoquinone, via FMN and iron-sulfur (Fe-S) centers, to quinones in the photosynthetic chain and possibly in a chloroplast respiratory chain. The immediate electron acceptor for the enzyme in this species is believed to be plastoquinone. Couples the redox reaction to proton translocation, and thus conserves the redox energy in a proton gradient. The polypeptide is NAD(P)H-quinone oxidoreductase subunit H, chloroplastic (Arabis hirsuta (Hairy rock-cress)).